The sequence spans 154 residues: Ribonuclease H (154 aa).

An RNase H type-1 domain is found at 5–146; that stretch reads EQNIVYLYCD…ADELANRGID (142 aa). Residues D14, E52, D74, and D138 each contribute to the Mg(2+) site.

It belongs to the RNase H family. In terms of assembly, monomer. The cofactor is Mg(2+).

The protein resides in the cytoplasm. It carries out the reaction Endonucleolytic cleavage to 5'-phosphomonoester.. Its function is as follows. Endonuclease that specifically degrades the RNA of RNA-DNA hybrids. This Coxiella burnetii (strain RSA 331 / Henzerling II) protein is Ribonuclease H.